A 35-amino-acid chain; its full sequence is N-acylglucosamine 2-epimerase (35 aa).

Positions 1-21 (LNLVDQLGEADEELAGTYAEL) are leucine-zipper.

This sequence belongs to the N-acylglucosamine 2-epimerase family. Homodimer. Forms a heterodimer with renin and inhibits its activity.

It carries out the reaction an N-acyl-D-glucosamine = an N-acyl-D-mannosamine. The protein operates within amino-sugar metabolism; N-acetylneuraminate degradation. Its function is as follows. Catalyzes the interconversion of N-acetylglucosamine to N-acetylmannosamine. Involved in the N-glycolylneuraminic acid (Neu5Gc) degradation pathway. In Canis lupus familiaris (Dog), this protein is N-acylglucosamine 2-epimerase.